Reading from the N-terminus, the 3066-residue chain is Serine-protein kinase ATM (3066 aa).

Ser-2 is subject to N-acetylserine. Ser-367 bears the Phosphoserine; by autocatalysis mark. Residues 829 to 862 form a disordered region; sequence LDHGVHPGEDDEDGGGCDSLMEAEGPSSTGLSTA. The segment at 1380 to 1389 is interaction with ABL1; the sequence is DPAPNPPYFP. Residue Ser-1899 is modified to Phosphoserine; by autocatalysis. The 631-residue stretch at 1946–2576 folds into the FAT domain; sequence EVAKVAQSCS…LFIILALANA (631 aa). A compositionally biased stretch (basic and acidic residues) spans 1973–1982; it reads TDEQEKRSPT. Disordered regions lie at residues 1973–2000 and 2585–2607; these read TDEQ…EKSK and PETT…LDED. The segment covering 1985–1996 has biased composition (polar residues); the sequence is EGSQGTTISSLS. A Phosphoserine; by autocatalysis modification is found at Ser-1987. The span at 2597-2607 shows a compositional bias: basic and acidic residues; that stretch reads TSKENSHLDED. Positions 2696–3009 constitute a PI3K/PI4K catalytic domain; the sequence is FKTEFRLAGG…ECKQSLSDTD (314 aa). A G-loop region spans residues 2702–2708; that stretch reads LAGGLNL. Residues 2877 to 2885 are catalytic loop; it reads GLGDRHVQN. The interval 2897–2921 is activation loop; that stretch reads HIDLGVAFEQGKILPTPETVPFRLS. A disordered region spans residues 2986–3007; sequence DESDLHSTPNADDQECKQSLSD. The segment covering 2991 to 3007 has biased composition (polar residues); sequence HSTPNADDQECKQSLSD. Ser-3006 bears the Phosphoserine mark. N6-acetyllysine is present on Lys-3026. The 33-residue stretch at 3034–3066 folds into the FATC domain; the sequence is TVLSVGGQVNLLIQQAMDPKNLSRLFPGWKAWV. The Microbody targeting signal; atypical motif lies at 3056–3058; it reads SRL.

The protein belongs to the PI3/PI4-kinase family. ATM subfamily. Homodimer. Dimers or tetramers in inactive state. On DNA damage, autophosphorylation dissociates ATM into monomers rendering them catalytically active. Binds p53/TP53, ABL1, BRCA1 and TERF1. Interacts with NBN (via FxF/Y motif). Part of the BRCA1-associated genome surveillance complex (BASC), which contains BRCA1, MSH2, MSH6, MLH1, ATM, BLM, PMS2 and the RAD50-MRE11-NBN protein complex. This association could be a dynamic process changing throughout the cell cycle and within subnuclear domains. Interacts with RAD17; DNA damage promotes the association. Interacts with EEF1E1; the interaction, induced on DNA damage, up-regulates TP53. Interacts with KAT8, NABP2, ATMIN and CEP164. Interacts with AP2B1 and AP3B2; the interaction occurs in cytoplasmic vesicles. Interacts with TELO2 and TTI1. Interacts with DDX1. Interacts with BRAT1. Interacts with CYREN (via XLF motif). Interacts (via microbody targeting signal) with PEX5; promoting translocation to peroxisomes in response to reactive oxygen species (ROS). Post-translationally, phosphorylated by NUAK1/ARK5. Autophosphorylation on Ser-367, Ser-1899, Ser-1987 correlates with DNA damage-mediated activation of the kinase. In terms of processing, phosphorylated by NUAK1/ARK5. Autophosphorylation on Ser-367, Ser-1899, Ser-1987 correlates with DNA damage-mediated activation of the kinase. During the late stages of DNA damage response, dephosphorylated following deacetylation by SIRT7, leading to ATM deactivation. Acetylation, on DNA damage, is required for activation of the kinase activity, dimer-monomer transition, and subsequent autophosphorylation on Ser-1987. Acetylated in vitro by KAT5/TIP60. Deacetylated by SIRT7 during the late stages of DNA damage response, promoting ATM dephosphorylation and subsequent deactivation. Expressed in brain, skeletal muscle, testis, followed by spleen, lung, kidney, heart, liver and thymus. Ubiquitously expressed in embryonal tissues.

It localises to the nucleus. The protein resides in the cytoplasmic vesicle. Its subcellular location is the cytoplasm. The protein localises to the cytoskeleton. It is found in the microtubule organizing center. It localises to the centrosome. The protein resides in the peroxisome matrix. It catalyses the reaction L-seryl-[protein] + ATP = O-phospho-L-seryl-[protein] + ADP + H(+). The enzyme catalyses L-threonyl-[protein] + ATP = O-phospho-L-threonyl-[protein] + ADP + H(+). Activated by the MRN (MRE11-RAD50-NBS1) complex in response to DNA double strand breaks (DSBs), which recruits ATM to DSBs and promotes its activation. Inhibited by wortmannin. Its function is as follows. Serine/threonine protein kinase which activates checkpoint signaling upon double strand breaks (DSBs), apoptosis and genotoxic stresses such as ionizing ultraviolet A light (UVA), thereby acting as a DNA damage sensor. Recognizes the substrate consensus sequence [ST]-Q. Phosphorylates 'Ser-139' of histone variant H2AX at double strand breaks (DSBs), thereby regulating DNA damage response mechanism. Also plays a role in pre-B cell allelic exclusion, a process leading to expression of a single immunoglobulin heavy chain allele to enforce clonality and monospecific recognition by the B-cell antigen receptor (BCR) expressed on individual B-lymphocytes. After the introduction of DNA breaks by the RAG complex on one immunoglobulin allele, acts by mediating a repositioning of the second allele to pericentromeric heterochromatin, preventing accessibility to the RAG complex and recombination of the second allele. Also involved in signal transduction and cell cycle control. May function as a tumor suppressor. Necessary for activation of ABL1 and SAPK. Phosphorylates DYRK2, CHEK2, p53/TP53, FBXW7, FANCD2, NFKBIA, BRCA1, CREBBP/CBP, RBBP8/CTIP, FBXO46, MRE11, nibrin (NBN), RAD50, RAD17, PELI1, TERF1, UFL1, RAD9, UBQLN4 and DCLRE1C. May play a role in vesicle and/or protein transport. Could play a role in T-cell development, gonad and neurological function. Binds DNA ends. Plays a role in replication-dependent histone mRNA degradation. Phosphorylation of DYRK2 in nucleus in response to genotoxic stress prevents its MDM2-mediated ubiquitination and subsequent proteasome degradation. Phosphorylates ATF2 which stimulates its function in DNA damage response. Phosphorylates ERCC6 which is essential for its chromatin remodeling activity at DNA double-strand breaks. Phosphorylates TTC5/STRAP at 'Ser-203' in the cytoplasm in response to DNA damage, which promotes TTC5/STRAP nuclear localization. Also involved in pexophagy by mediating phosphorylation of PEX5: translocated to peroxisomes in response to reactive oxygen species (ROS), and catalyzes phosphorylation of PEX5, promoting PEX5 ubiquitination and induction of pexophagy. The sequence is that of Serine-protein kinase ATM (Atm) from Mus musculus (Mouse).